Consider the following 156-residue polypeptide: Small ribosomal subunit protein uS7 (156 aa).

Belongs to the universal ribosomal protein uS7 family. As to quaternary structure, part of the 30S ribosomal subunit. Contacts proteins S9 and S11.

One of the primary rRNA binding proteins, it binds directly to 16S rRNA where it nucleates assembly of the head domain of the 30S subunit. Is located at the subunit interface close to the decoding center, probably blocks exit of the E-site tRNA. This chain is Small ribosomal subunit protein uS7, found in Brucella melitensis biotype 1 (strain ATCC 23456 / CCUG 17765 / NCTC 10094 / 16M).